We begin with the raw amino-acid sequence, 144 residues long: Large ribosomal subunit protein uL11 (144 aa).

Belongs to the universal ribosomal protein uL11 family. As to quaternary structure, part of the ribosomal stalk of the 50S ribosomal subunit. Interacts with L10 and the large rRNA to form the base of the stalk. L10 forms an elongated spine to which L12 dimers bind in a sequential fashion forming a multimeric L10(L12)X complex. Post-translationally, one or more lysine residues are methylated.

Functionally, forms part of the ribosomal stalk which helps the ribosome interact with GTP-bound translation factors. This chain is Large ribosomal subunit protein uL11, found in Neisseria meningitidis serogroup A / serotype 4A (strain DSM 15465 / Z2491).